The sequence spans 281 residues: Putative outer membrane protein BBA52 (281 aa).

Positions 162 to 281 are disordered; that stretch reads KRISDNQSKL…FFDSLEDQFI (120 aa). Residues 179–196 are compositionally biased toward polar residues; the sequence is NKSVGSKFSKNSRPSKSP. Residues 219 to 249 are compositionally biased toward acidic residues; the sequence is EFLDDPSQESDELEREYQDDELESEDPDDGE. Over residues 250 to 262 the composition is skewed to basic and acidic residues; that stretch reads REYQDDRESRDDT. Residues 263–281 are compositionally biased toward acidic residues; that stretch reads FNEDQSEDEFFDSLEDQFI.

It is found in the cell outer membrane. In Borreliella burgdorferi (strain ATCC 35210 / DSM 4680 / CIP 102532 / B31) (Borrelia burgdorferi), this protein is Putative outer membrane protein BBA52.